The chain runs to 237 residues: Ig heavy chain Mem5 (237 aa).

Ig-like domains follow at residues 1-119 and 126-218; these read EVKL…LTVS and PSVY…KKIE. Cysteine 22 and cysteine 98 are joined by a disulfide. The segment at 101-105 is d segment; that stretch reads VDYGT. The tract at residues 106–120 is JH2 segment; it reads NYDYWGQGTTLTVSS. A disulfide bridge links cysteine 147 with cysteine 202.

Its subcellular location is the secreted. Functionally, anti-influenza H3N2 neuraminidase antibody. This is Ig heavy chain Mem5 from Mus musculus (Mouse).